The chain runs to 68 residues: DNA-directed RNA polymerase subunit omega (68 aa).

The protein belongs to the RNA polymerase subunit omega family. The RNAP catalytic core consists of 2 alpha, 1 beta, 1 beta' and 1 omega subunit. When a sigma factor is associated with the core the holoenzyme is formed, which can initiate transcription.

The enzyme catalyses RNA(n) + a ribonucleoside 5'-triphosphate = RNA(n+1) + diphosphate. Functionally, promotes RNA polymerase assembly. Latches the N- and C-terminal regions of the beta' subunit thereby facilitating its interaction with the beta and alpha subunits. In Chromobacterium violaceum (strain ATCC 12472 / DSM 30191 / JCM 1249 / CCUG 213 / NBRC 12614 / NCIMB 9131 / NCTC 9757 / MK), this protein is DNA-directed RNA polymerase subunit omega.